Consider the following 124-residue polypeptide: Small ribosomal subunit protein uS12 (124 aa).

The residue at position 89 (Asp-89) is a 3-methylthioaspartic acid. The disordered stretch occupies residues 104–124 (TDGVENRKQSRSKYGTKRPKK). A compositionally biased stretch (basic residues) spans 112–124 (QSRSKYGTKRPKK).

The protein belongs to the universal ribosomal protein uS12 family. In terms of assembly, part of the 30S ribosomal subunit. Contacts proteins S8 and S17. May interact with IF1 in the 30S initiation complex.

With S4 and S5 plays an important role in translational accuracy. Its function is as follows. Interacts with and stabilizes bases of the 16S rRNA that are involved in tRNA selection in the A site and with the mRNA backbone. Located at the interface of the 30S and 50S subunits, it traverses the body of the 30S subunit contacting proteins on the other side and probably holding the rRNA structure together. The combined cluster of proteins S8, S12 and S17 appears to hold together the shoulder and platform of the 30S subunit. In Thermosipho melanesiensis (strain DSM 12029 / CIP 104789 / BI429), this protein is Small ribosomal subunit protein uS12.